Here is a 334-residue protein sequence, read N- to C-terminus: Formamidase (334 aa).

Residues 14-260 (FLVAAIQFPV…WEIVTGEIYP (247 aa)) enclose the CN hydrolase domain. The Proton acceptor role is filled by Glu-60. The active-site Proton donor is the Lys-133. Cys-166 acts as the Nucleophile in catalysis.

This sequence belongs to the carbon-nitrogen hydrolase superfamily. Aliphatic amidase family. In terms of assembly, homotetramer.

The enzyme catalyses formamide + H2O = formate + NH4(+). Inhibited by iodoacetate. Appears to be regulated by the fur protein, but this effect is not mediated at the transcriptional level. In terms of biological role, is an aliphatic amidase with a restricted substrate specificity, as it only hydrolyzes formamide. Probably involved in the nitrogen metabolism of H.pylori. This chain is Formamidase (amiF), found in Helicobacter pylori (strain ATCC 700392 / 26695) (Campylobacter pylori).